We begin with the raw amino-acid sequence, 228 residues long: FCS-Like Zinc finger 12 (228 aa).

The FLZ-type zinc finger occupies 162-205 (DFLTSCCLCKKKLQGKDIYMYKGDEGFCSKECRSLKIMEDSLKE).

It belongs to the FLZ family. As to quaternary structure, interacts with KIN10 and KIN11 via its FLZ-type zinc finger domain. Interacts with KINB1 and KINB2 via its N-terminal part. Forms homodimer and heterodimer with FLZ2 and FLZ10 in vitro.

In terms of biological role, may act as an adapter to facilitate the interaction of SnRK1 complex with effector proteins, conferring tissue- and stimulus-type specific differences in the SnRK1 regulation pathway. The sequence is that of FCS-Like Zinc finger 12 from Arabidopsis thaliana (Mouse-ear cress).